A 105-amino-acid polypeptide reads, in one-letter code: MNSISVSVTNGLIFSTLLFVISVAGIIINRRNILILLMSIELMLLAVNTNFLIFANMHHQAMGGVFVFFIMAVAAAETAIGLAIVVAIFRKRKTIDLSKLNTLRG.

Transmembrane regions (helical) follow at residues 8 to 28, 33 to 53, and 65 to 85; these read VTNGLIFSTLLFVISVAGIII, ILILLMSIELMLLAVNTNFLI, and VFVFFIMAVAAAETAIGLAIV.

The protein belongs to the complex I subunit 4L family. NDH-1 is composed of 14 different subunits. Subunits NuoA, H, J, K, L, M, N constitute the membrane sector of the complex.

Its subcellular location is the cell inner membrane. The catalysed reaction is a quinone + NADH + 5 H(+)(in) = a quinol + NAD(+) + 4 H(+)(out). In terms of biological role, NDH-1 shuttles electrons from NADH, via FMN and iron-sulfur (Fe-S) centers, to quinones in the respiratory chain. The immediate electron acceptor for the enzyme in this species is believed to be ubiquinone. Couples the redox reaction to proton translocation (for every two electrons transferred, four hydrogen ions are translocated across the cytoplasmic membrane), and thus conserves the redox energy in a proton gradient. This Francisella philomiragia subsp. philomiragia (strain ATCC 25017 / CCUG 19701 / FSC 153 / O#319-036) protein is NADH-quinone oxidoreductase subunit K.